The following is a 331-amino-acid chain: Ketol-acid reductoisomerase (NADP(+)) (331 aa).

A KARI N-terminal Rossmann domain is found at 2–182 (AKVYYDEDAN…GGTKGGVLET (181 aa)). NADP(+)-binding positions include 25–28 (YGSQ), S51, S53, and 83–86 (DEKQ). H108 is a catalytic residue. Residue G134 coordinates NADP(+). The KARI C-terminal knotted domain occupies 183–328 (TFKDETETDL…VELRAMMPWL (146 aa)). Positions 191, 195, 227, and 231 each coordinate Mg(2+). Residue S252 participates in substrate binding.

Belongs to the ketol-acid reductoisomerase family. It depends on Mg(2+) as a cofactor.

It carries out the reaction (2R)-2,3-dihydroxy-3-methylbutanoate + NADP(+) = (2S)-2-acetolactate + NADPH + H(+). The catalysed reaction is (2R,3R)-2,3-dihydroxy-3-methylpentanoate + NADP(+) = (S)-2-ethyl-2-hydroxy-3-oxobutanoate + NADPH + H(+). The protein operates within amino-acid biosynthesis; L-isoleucine biosynthesis; L-isoleucine from 2-oxobutanoate: step 2/4. Its pathway is amino-acid biosynthesis; L-valine biosynthesis; L-valine from pyruvate: step 2/4. Its function is as follows. Involved in the biosynthesis of branched-chain amino acids (BCAA). Catalyzes an alkyl-migration followed by a ketol-acid reduction of (S)-2-acetolactate (S2AL) to yield (R)-2,3-dihydroxy-isovalerate. In the isomerase reaction, S2AL is rearranged via a Mg-dependent methyl migration to produce 3-hydroxy-3-methyl-2-ketobutyrate (HMKB). In the reductase reaction, this 2-ketoacid undergoes a metal-dependent reduction by NADPH to yield (R)-2,3-dihydroxy-isovalerate. This is Ketol-acid reductoisomerase (NADP(+)) from Clostridium novyi (strain NT).